Here is a 735-residue protein sequence, read N- to C-terminus: MAANSNSRVASNHTSKKQKVRRNIHPFTNNTRIKRASKIVKFNDSGEGDHVSDQRSNKENVLTYKSLKSRASDLLKMRETLPVYQHKREIMSYIESNPVTVLIGETGSGKSTQIPQFVLEKLYDTKKHGSIAVTQPRRVAAINLATRVAQEHGCKLGEQVGYSVRFDNTTTTRTRLKYLTDGMLLRELMMNSDLREYSVIVIDEAHERTVLTDLILGFLKSLIQGPRPDLRIIVMSATLQAEKFSEFFNNAPILFVEGRKFDVKQYYLKAPTDDIVDAVIRCCIQINQGEELGDILCFLPGQEEIDKAVTIMEKIAKYVSDEAPVPLIVPYPLYAALPAVQQSLVFAPIKGFKRKVVFSTNIAETSVTISGVKFVVDSGLRKVKVWRHQLGLATLLTVPISQASAMQRSGRAGRESEGKSFRLYCESDYVKLPKQSEPEIARSDVTSPVLMLKRYGVDDLLNWTWFENPGKEAIVMGLQELYELGALDTRGKITKRGQQMALLPLQPHLSSVLIKASEVGCLSQVIDIVSCLSVENLLLNPSPEERDEVNERRLSLCNAGKRYGDLIMLKELFDIYFYELGKSQDASSERNDWCKGLCISIRGFKNVIRVRDQLRVYCKRLFSSISEEDEESKKIGEDGELISKILKCFLTGFIKNTAIGMPDRSYRTVSTGEPISIHPSSMLFMNKSCPGIMYTEYVFTTKGYARNVSRIELSWLQEVVTNAAAVAKQKVSDSK.

Over residues 1-13 the composition is skewed to polar residues; sequence MAANSNSRVASNH. The segment at 1-29 is disordered; it reads MAANSNSRVASNHTSKKQKVRRNIHPFTN. Basic residues predominate over residues 14–24; the sequence is TSKKQKVRRNI. The Helicase ATP-binding domain occupies 91–257; sequence MSYIESNPVT…FNNAPILFVE (167 aa). Residue 104-111 coordinates ATP; the sequence is GETGSGKS. Positions 203–206 match the DEAH box motif; sequence DEAH. One can recognise a Helicase C-terminal domain in the interval 262-456; that stretch reads DVKQYYLKAP…SPVLMLKRYG (195 aa).

The protein belongs to the DEAD box helicase family. DEAH subfamily. Interacts with NOP19. Interacts with UBP10.

The protein localises to the nucleus. It is found in the nucleolus. It catalyses the reaction ATP + H2O = ADP + phosphate + H(+). In terms of biological role, probable ATP-binding RNA helicase. Required for 18S rRNA synthesis. This is Probable ATP-dependent RNA helicase DHR2 (DHR2) from Saccharomyces cerevisiae (strain ATCC 204508 / S288c) (Baker's yeast).